The primary structure comprises 93 residues: CRISPR-associated endoribonuclease Cas2 1 (93 aa).

Mg(2+) is bound at residue Asp-8.

This sequence belongs to the CRISPR-associated endoribonuclease Cas2 protein family. In terms of assembly, homodimer, forms a heterotetramer with a Cas1 homodimer. It depends on Mg(2+) as a cofactor.

In terms of biological role, CRISPR (clustered regularly interspaced short palindromic repeat), is an adaptive immune system that provides protection against mobile genetic elements (viruses, transposable elements and conjugative plasmids). CRISPR clusters contain sequences complementary to antecedent mobile elements and target invading nucleic acids. CRISPR clusters are transcribed and processed into CRISPR RNA (crRNA). Functions as a ssRNA-specific endoribonuclease. Involved in the integration of spacer DNA into the CRISPR cassette. The chain is CRISPR-associated endoribonuclease Cas2 1 from Chloroflexus aurantiacus (strain ATCC 29366 / DSM 635 / J-10-fl).